The following is a 174-amino-acid chain: Nicotinamide-nucleotide adenylyltransferase (174 aa).

The protein belongs to the archaeal NMN adenylyltransferase family.

It localises to the cytoplasm. The catalysed reaction is beta-nicotinamide D-ribonucleotide + ATP + H(+) = diphosphate + NAD(+). The protein operates within cofactor biosynthesis; NAD(+) biosynthesis; NAD(+) from nicotinamide D-ribonucleotide: step 1/1. The protein is Nicotinamide-nucleotide adenylyltransferase of Methanospirillum hungatei JF-1 (strain ATCC 27890 / DSM 864 / NBRC 100397 / JF-1).